Here is a 543-residue protein sequence, read N- to C-terminus: Cytochrome P450 1B1 (543 aa).

C470 contacts heme.

The protein belongs to the cytochrome P450 family. It depends on heme as a cofactor.

Its subcellular location is the endoplasmic reticulum membrane. It is found in the microsome membrane. The protein resides in the mitochondrion. The catalysed reaction is an organic molecule + reduced [NADPH--hemoprotein reductase] + O2 = an alcohol + oxidized [NADPH--hemoprotein reductase] + H2O + H(+). It carries out the reaction 17beta-estradiol + reduced [NADPH--hemoprotein reductase] + O2 = 2-hydroxy-17beta-estradiol + oxidized [NADPH--hemoprotein reductase] + H2O + H(+). It catalyses the reaction 17beta-estradiol + reduced [NADPH--hemoprotein reductase] + O2 = 4-hydroxy-17beta-estradiol + oxidized [NADPH--hemoprotein reductase] + H2O + H(+). The enzyme catalyses estrone + reduced [NADPH--hemoprotein reductase] + O2 = 2-hydroxyestrone + oxidized [NADPH--hemoprotein reductase] + H2O + H(+). The catalysed reaction is estrone + reduced [NADPH--hemoprotein reductase] + O2 = 4-hydroxyestrone + oxidized [NADPH--hemoprotein reductase] + H2O + H(+). It carries out the reaction testosterone + reduced [NADPH--hemoprotein reductase] + O2 = 6beta,17beta-dihydroxyandrost-4-en-3-one + oxidized [NADPH--hemoprotein reductase] + H2O + H(+). It catalyses the reaction progesterone + reduced [NADPH--hemoprotein reductase] + O2 = 6beta-hydroxyprogesterone + oxidized [NADPH--hemoprotein reductase] + H2O + H(+). The enzyme catalyses progesterone + reduced [NADPH--hemoprotein reductase] + O2 = 16alpha-hydroxyprogesterone + oxidized [NADPH--hemoprotein reductase] + H2O + H(+). The catalysed reaction is all-trans-retinol + reduced [NADPH--hemoprotein reductase] + O2 = all-trans-retinal + oxidized [NADPH--hemoprotein reductase] + 2 H2O + H(+). It carries out the reaction all-trans-retinal + reduced [NADPH--hemoprotein reductase] + O2 = all-trans-retinoate + oxidized [NADPH--hemoprotein reductase] + H2O + 2 H(+). It catalyses the reaction (5Z,8Z,11Z,14Z)-eicosatetraenoate + reduced [NADPH--hemoprotein reductase] + O2 = (8R,9S)-epoxy-(5Z,11Z,14Z)-eicosatrienoate + oxidized [NADPH--hemoprotein reductase] + H2O + H(+). The enzyme catalyses (5Z,8Z,11Z,14Z)-eicosatetraenoate + reduced [NADPH--hemoprotein reductase] + O2 = (11R,12S)-epoxy-(5Z,8Z,14Z)-eicosatrienoate + oxidized [NADPH--hemoprotein reductase] + H2O + H(+). The catalysed reaction is (5Z,8Z,11Z,14Z)-eicosatetraenoate + reduced [NADPH--hemoprotein reductase] + O2 = (11S,12R)-epoxy-(5Z,8Z,14Z)-eicosatrienoate + oxidized [NADPH--hemoprotein reductase] + H2O + H(+). It carries out the reaction (5Z,8Z,11Z,14Z)-eicosatetraenoate + reduced [NADPH--hemoprotein reductase] + O2 = (14S,15R)-epoxy-(5Z,8Z,11Z)-eicosatrienoate + oxidized [NADPH--hemoprotein reductase] + H2O + H(+). It catalyses the reaction (5Z,8Z,11Z,14Z)-eicosatetraenoate + reduced [NADPH--hemoprotein reductase] + O2 = (14R,15S)-epoxy-(5Z,8Z,11Z)-eicosatrienoate + oxidized [NADPH--hemoprotein reductase] + H2O + H(+). The enzyme catalyses (5S)-hydroperoxy-(6E,8Z,11Z,14Z)-eicosatetraenoate = 5-oxo-(6E,8Z,11Z,14Z)-eicosatetraenoate + H2O. The catalysed reaction is (12S)-hydroperoxy-(5Z,8Z,10E,14Z)-eicosatetraenoate = 12-oxo-(5Z,8Z,10E,14Z)-eicosatetraenoate + H2O. It carries out the reaction (15S)-hydroperoxy-(5Z,8Z,11Z,13E)-eicosatetraenoate = 15-oxo-(5Z,8Z,11Z,13E)-eicosatetraenoate + H2O. It catalyses the reaction (13S)-hydroperoxy-(9Z,11E)-octadecadienoate = 13-oxo-(9Z,11E)-octadecadienoate + H2O. It participates in steroid hormone biosynthesis. It functions in the pathway cofactor metabolism; retinol metabolism. Its pathway is lipid metabolism; arachidonate metabolism. With respect to regulation, enzyme activity is increased by cytochrome b5. Enzyme activity is increased by liposomes containing anionic phospholipids, phosphatidic acid and cardiolipin. Inhibited by naringenin with an IC(50) of 5 uM. In terms of biological role, a cytochrome P450 monooxygenase involved in the metabolism of various endogenous substrates, including fatty acids, steroid hormones and vitamins. Mechanistically, uses molecular oxygen inserting one oxygen atom into a substrate, and reducing the second into a water molecule, with two electrons provided by NADPH via cytochrome P450 reductase (NADPH--hemoprotein reductase). Exhibits catalytic activity for the formation of hydroxyestrogens from 17beta-estradiol (E2), namely 2- and 4-hydroxy E2. Metabolizes testosterone and progesterone to B or D ring hydroxylated metabolites. May act as a major enzyme for all-trans retinoic acid biosynthesis in extrahepatic tissues. Catalyzes two successive oxidative transformation of all-trans retinol to all-trans retinal and then to the active form all-trans retinoic acid. Catalyzes the epoxidation of double bonds of certain PUFA. Converts arachidonic acid toward epoxyeicosatrienoic acid (EpETrE) regioisomers, 8,9-, 11,12-, and 14,15- EpETrE, that function as lipid mediators in the vascular system. Additionally, displays dehydratase activity toward oxygenated eicosanoids including hydroperoxyeicosatetraenoates (HpETEs). This activity is independent of cytochrome P450 reductase, NADPH, and O2. Also involved in the oxidative metabolism of xenobiotics, particularly converting polycyclic aromatic hydrocarbons and heterocyclic aryl amines procarcinogens to DNA-damaging products. Plays an important role in retinal vascular development. Under ambient/hyperoxic O2 conditions, promotes angiogenesis and capillary morphogenesis of retinal endothelial cells and pericytes, likely by metabolizing the oxygenated products symptomatic of oxidative stress. Also, contributes to oxidative homeostasis and ultrastructural organization and function of trabecular meshwork tissue through modulation of POSTN expression. The chain is Cytochrome P450 1B1 from Rattus norvegicus (Rat).